We begin with the raw amino-acid sequence, 77 residues long: Epoxide hydrolase (77 aa).

Monomer.

The enzyme catalyses an epoxide + H2O = an ethanediol. In terms of biological role, this enzyme acts on aliphatic epoxides. Its substrates include epichlorohydrin, epibromohydrin, epoxyoctane and styrene epoxide. In Pseudomonas sp. (strain AD1), this protein is Epoxide hydrolase.